We begin with the raw amino-acid sequence, 442 residues long: GTPase Der (442 aa).

EngA-type G domains are found at residues 2–168 (ATVL…EEAG) and 182–356 (LKVA…EKID). GTP is bound by residues 8–15 (GRPNVGKS), 55–59 (DTCGL), 118–121 (NKVE), 188–195 (GKPNAGKS), 235–239 (DTAGM), and 301–304 (NKSD). In terms of domain architecture, KH-like spans 357–442 (LRIPTGLLNN…PIFIKLRRKK (86 aa)).

The protein belongs to the TRAFAC class TrmE-Era-EngA-EngB-Septin-like GTPase superfamily. EngA (Der) GTPase family. Associates with the 50S ribosomal subunit.

In terms of biological role, GTPase that plays an essential role in the late steps of ribosome biogenesis. This chain is GTPase Der, found in Kosmotoga olearia (strain ATCC BAA-1733 / DSM 21960 / TBF 19.5.1).